Here is a 102-residue protein sequence, read N- to C-terminus: UPF0213 protein XAC3202 (102 aa).

The region spanning 5–80 (KPWHLYLLLC…KRLPRARKLA (76 aa)) is the GIY-YIG domain.

The protein belongs to the UPF0213 family.

This is UPF0213 protein XAC3202 from Xanthomonas axonopodis pv. citri (strain 306).